Here is a 432-residue protein sequence, read N- to C-terminus: Lipoyl synthase, mitochondrial (432 aa).

Positions 32-68 (TLGATPGSTSTSTSTSTATTTTLESTSTSTSGDATET) are enriched in low complexity. A disordered region spans residues 32-71 (TLGATPGSTSTSTSTSTATTTTLESTSTSTSGDATETTIK). Cys-150, Cys-155, Cys-161, Cys-180, Cys-184, Cys-187, and Ser-395 together coordinate [4Fe-4S] cluster. The region spanning 165 to 384 (KKSEATATIM…RDVALEMGFL (220 aa)) is the Radical SAM core domain.

This sequence belongs to the radical SAM superfamily. Lipoyl synthase family. Requires [4Fe-4S] cluster as cofactor.

Its subcellular location is the mitochondrion. The enzyme catalyses [[Fe-S] cluster scaffold protein carrying a second [4Fe-4S](2+) cluster] + N(6)-octanoyl-L-lysyl-[protein] + 2 oxidized [2Fe-2S]-[ferredoxin] + 2 S-adenosyl-L-methionine + 4 H(+) = [[Fe-S] cluster scaffold protein] + N(6)-[(R)-dihydrolipoyl]-L-lysyl-[protein] + 4 Fe(3+) + 2 hydrogen sulfide + 2 5'-deoxyadenosine + 2 L-methionine + 2 reduced [2Fe-2S]-[ferredoxin]. It participates in protein modification; protein lipoylation via endogenous pathway; protein N(6)-(lipoyl)lysine from octanoyl-[acyl-carrier-protein]: step 2/2. Catalyzes the radical-mediated insertion of two sulfur atoms into the C-6 and C-8 positions of the octanoyl moiety bound to the lipoyl domains of lipoate-dependent enzymes, thereby converting the octanoylated domains into lipoylated derivatives. In Lodderomyces elongisporus (strain ATCC 11503 / CBS 2605 / JCM 1781 / NBRC 1676 / NRRL YB-4239) (Yeast), this protein is Lipoyl synthase, mitochondrial.